The chain runs to 240 residues: Probable transcriptional regulatory protein SO_3401 (240 aa).

The protein belongs to the TACO1 family.

It localises to the cytoplasm. The chain is Probable transcriptional regulatory protein SO_3401 from Shewanella oneidensis (strain ATCC 700550 / JCM 31522 / CIP 106686 / LMG 19005 / NCIMB 14063 / MR-1).